The sequence spans 203 residues: Ribonuclease HII (203 aa).

Positions 16–203 (ENIACCDEVG…HRKSFLNKIL (188 aa)) constitute an RNase H type-2 domain. 3 residues coordinate a divalent metal cation: aspartate 22, glutamate 23, and aspartate 120.

Belongs to the RNase HII family. It depends on Mn(2+) as a cofactor. The cofactor is Mg(2+).

The protein resides in the cytoplasm. The catalysed reaction is Endonucleolytic cleavage to 5'-phosphomonoester.. Endonuclease that specifically degrades the RNA of RNA-DNA hybrids. The sequence is that of Ribonuclease HII from Alkaliphilus oremlandii (strain OhILAs) (Clostridium oremlandii (strain OhILAs)).